The primary structure comprises 320 residues: Uroplakin-3b (320 aa).

The N-terminal stretch at 1–29 is a signal peptide; it reads MGLPWGQPHLGLQMLLLALNCLRPSLSLG. Residues 30-240 lie on the Lumenal side of the membrane; sequence EWGSWMDASS…LHPLFSGRPP (211 aa). Asn-133 carries N-linked (GlcNAc...) asparagine glycosylation. A helical membrane pass occupies residues 241-266; the sequence is TLGLLGSLYHALLQPVVAGGGPGAAA. Topologically, residues 267–320 are cytoplasmic; the sequence is DRLLHGQALHDPPHPTQRGRHTAGGLQAWPGPPPQPQPLAWPLCMGLGEMGRWE. The interval 273 to 303 is disordered; the sequence is QALHDPPHPTQRGRHTAGGLQAWPGPPPQPQ.

Belongs to the uroplakin-3 family. As to quaternary structure, heterodimer with uroplakin-1B (UPK1B).

It is found in the cell membrane. In terms of biological role, component of the asymmetric unit membrane (AUM); a highly specialized biomembrane elaborated by terminally differentiated urothelial cells. May play an important role in AUM-cytoskeleton interaction in terminally differentiated urothelial cells. It also contributes to the formation of urothelial glycocalyx which may play an important role in preventing bacterial adherence. In Homo sapiens (Human), this protein is Uroplakin-3b (UPK3B).